Reading from the N-terminus, the 373-residue chain is UDP-sugar transporter UST74c (373 aa).

Residues 27–49 (LEEKMGGSADRSSLLDGSGSKEL) form a disordered region. The residue at position 50 (serine 50) is a Phosphoserine. 8 consecutive transmembrane segments (helical) span residues 89–111 (HFPS…LGMG), 131–153 (FPLP…TLSL), 174–196 (ILGL…GALL), 206–225 (MRGY…NGVY), 238–260 (YGLM…YVTG), 275–297 (VFVV…TILC), 302–324 (SALT…GMFI), and 329–351 (VFSW…YTYV).

Belongs to the TPT transporter family. SLC35D subfamily.

The protein resides in the golgi apparatus membrane. Functionally, involved in the import of UDP-sugars from the cytoplasm into the Golgi lumen. In Drosophila melanogaster (Fruit fly), this protein is UDP-sugar transporter UST74c (frc).